The sequence spans 410 residues: L-sorbose 1-phosphate reductase (410 aa).

Positions 40, 69, and 70 each coordinate Zn(2+). Residues arginine 221 and 309-310 each bind NAD(+); that span reads GT.

This sequence belongs to the zinc-containing alcohol dehydrogenase family. It depends on Zn(2+) as a cofactor.

Its function is as follows. Reduces L-sorbose 1-phosphate to D-glucitol 6-phosphate. This is L-sorbose 1-phosphate reductase (sorE) from Klebsiella pneumoniae.